A 1009-amino-acid polypeptide reads, in one-letter code: Protein naked cuticle (1009 aa).

2 stretches are compositionally biased toward polar residues: residues 68–83 and 121–130; these read IITT…ASNK and LPQDMSSSGS. Positions 68–166 are disordered; the sequence is IITTPPGNAS…QQQTAAAATG (99 aa). Positions 152–166 are enriched in low complexity; it reads QQQQQQQQTAAAATG. The segment at 206–282 is interaction with dsh; it reads EFTCDVSVEG…TVSPEGKSKS (77 aa). The 37-residue stretch at 217-253 folds into the EF-hand domain; the sequence is KSSQPLQFSFTFYDLDGHHGKITKDDIVGIVYTIYES. Disordered stretches follow at residues 328–433, 456–479, and 515–580; these read MSKQ…QQQL, AGNE…RQQD, and GNDS…QQQR. Positions 349–359 are enriched in basic residues; sequence RRQHRYRPRKL. Positions 370–387 are enriched in basic and acidic residues; the sequence is NSEKEKERERERERESHA. A compositionally biased stretch (basic residues) spans 403 to 414; that stretch reads KSHHHHHHHGRY. Over residues 515 to 525 the composition is skewed to polar residues; that stretch reads GNDSGNWQNRH. Composition is skewed to low complexity over residues 526-535 and 570-580; these read LQQSLQQQPQ and HQQLQQQQQQR. A required for nuclear localization and inhibition of Wnt signaling region spans residues 584–613; the sequence is ECWKSALNRNDLISIIRESMEKNRLCFQLN. 4 disordered regions span residues 619–662, 773–799, 835–899, and 955–982; these read NVSP…SPLS, SAAH…HNQK, LQQK…SAGS, and TESG…LDTS. Low complexity-rich tracts occupy residues 624–638 and 653–662; these read RQPA…QRQR and SPAAPQSPLS. The segment covering 843–857 has biased composition (basic residues); it reads RRHRHKQQQQQHHHQ. Residues 858 to 875 are compositionally biased toward low complexity; sequence QQQQQQQQQNQQQQQQQQ. A compositionally biased stretch (acidic residues) spans 968-979; sequence EADEGQEQEVEL.

The protein belongs to the NKD family. As to quaternary structure, interacts with dsh.

The protein localises to the cell membrane. The protein resides in the cytoplasm. It is found in the nucleus. Functionally, cell autonomous antagonist of the canonical Wnt signaling pathway. May activate a second Wnt signaling pathway that controls planar cell polarity. Required for neuroblast specification. The sequence is that of Protein naked cuticle from Drosophila pseudoobscura pseudoobscura (Fruit fly).